Consider the following 248-residue polypeptide: Probable proteasome subunit alpha type-3 (248 aa).

The protein belongs to the peptidase T1A family. The 26S proteasome consists of a 20S proteasome core and two 19S regulatory subunits. The 20S proteasome core is composed of 28 subunits that are arranged in four stacked rings, resulting in a barrel-shaped structure. The two end rings are each formed by seven alpha subunits, and the two central rings are each formed by seven beta subunits. The catalytic chamber with the active sites is on the inside of the barrel.

It is found in the cytoplasm. The protein localises to the nucleus. Functionally, the proteasome is a multicatalytic proteinase complex which is characterized by its ability to cleave peptides with Arg, Phe, Tyr, Leu, and Glu adjacent to the leaving group at neutral or slightly basic pH. The proteasome has an ATP-dependent proteolytic activity. This Schizosaccharomyces pombe (strain 972 / ATCC 24843) (Fission yeast) protein is Probable proteasome subunit alpha type-3.